A 645-amino-acid polypeptide reads, in one-letter code: DNA ligase (645 aa).

NAD(+) contacts are provided by residues 30-34 (DDEYD), 79-80 (SM), and Glu-106. Lys-108 (N6-AMP-lysine intermediate) is an active-site residue. Arg-129, Glu-163, and Lys-302 together coordinate NAD(+). 4 residues coordinate Zn(2+): Cys-396, Cys-399, Cys-412, and Cys-417. Residues 570–645 (LKTNIFSGKT…IDESEYESLK (76 aa)) form the BRCT domain.

This sequence belongs to the NAD-dependent DNA ligase family. LigA subfamily. Requires Mg(2+) as cofactor. Mn(2+) is required as a cofactor.

The enzyme catalyses NAD(+) + (deoxyribonucleotide)n-3'-hydroxyl + 5'-phospho-(deoxyribonucleotide)m = (deoxyribonucleotide)n+m + AMP + beta-nicotinamide D-nucleotide.. DNA ligase that catalyzes the formation of phosphodiester linkages between 5'-phosphoryl and 3'-hydroxyl groups in double-stranded DNA using NAD as a coenzyme and as the energy source for the reaction. It is essential for DNA replication and repair of damaged DNA. This is DNA ligase from Campylobacter fetus subsp. fetus (strain 82-40).